The primary structure comprises 747 residues: NAD(P)H-quinone oxidoreductase subunit 5, chloroplastic (747 aa).

16 consecutive transmembrane segments (helical) span residues 9–29 (WIIP…LLLF), 40–60 (WAFP…DLSI), 89–109 (IDSL…LVLI), 125–145 (FAYL…SNLI), 147–167 (VYIF…FWFT), 185–205 (GDFG…SLEF), 219–239 (NEVN…GSVA), 258–278 (TPIS…FLVA), 280–300 (LLPF…IGII), 327–347 (LGYM…FHLI), 354–374 (ALLF…VGYS), 396–416 (TAFL…CFWS), 425–445 (WLYS…TAFY), 552–572 (LFSM…GISF), 606–626 (FFTN…IASF), and 727–747 (YILF…SFFI).

It belongs to the complex I subunit 5 family. NDH is composed of at least 16 different subunits, 5 of which are encoded in the nucleus.

The protein resides in the plastid. The protein localises to the chloroplast thylakoid membrane. The enzyme catalyses a plastoquinone + NADH + (n+1) H(+)(in) = a plastoquinol + NAD(+) + n H(+)(out). The catalysed reaction is a plastoquinone + NADPH + (n+1) H(+)(in) = a plastoquinol + NADP(+) + n H(+)(out). Its function is as follows. NDH shuttles electrons from NAD(P)H:plastoquinone, via FMN and iron-sulfur (Fe-S) centers, to quinones in the photosynthetic chain and possibly in a chloroplast respiratory chain. The immediate electron acceptor for the enzyme in this species is believed to be plastoquinone. Couples the redox reaction to proton translocation, and thus conserves the redox energy in a proton gradient. The protein is NAD(P)H-quinone oxidoreductase subunit 5, chloroplastic (ndhF) of Lotus japonicus (Lotus corniculatus var. japonicus).